Here is a 269-residue protein sequence, read N- to C-terminus: tRNA (guanine-N(1)-)-methyltransferase (269 aa).

Residues glycine 115 and 139–144 (LGDYVL) contribute to the S-adenosyl-L-methionine site.

The protein belongs to the RNA methyltransferase TrmD family. In terms of assembly, homodimer.

The protein resides in the cytoplasm. The catalysed reaction is guanosine(37) in tRNA + S-adenosyl-L-methionine = N(1)-methylguanosine(37) in tRNA + S-adenosyl-L-homocysteine + H(+). Functionally, specifically methylates guanosine-37 in various tRNAs. This Pseudarthrobacter chlorophenolicus (strain ATCC 700700 / DSM 12829 / CIP 107037 / JCM 12360 / KCTC 9906 / NCIMB 13794 / A6) (Arthrobacter chlorophenolicus) protein is tRNA (guanine-N(1)-)-methyltransferase.